The following is a 508-amino-acid chain: Monocarboxylate transporter 9 (508 aa).

Residues 1-12 (MEFQKSPDGGWG) are Cytoplasmic-facing. 12 helical membrane passes run 13–33 (WVIV…PLAV), 53–73 (WVGS…SLFV), 80–100 (PVTI…SLAP), 102–122 (IYFL…LLYT), 137–157 (GLAL…YAAL), 164–184 (FYGL…ILAC), 303–323 (VFSA…PPSL), 341–361 (MPLI…LGIL), 370–390 (LYLY…IPFA), 396–416 (LAIL…FPYV), 431–451 (GILM…VGWF), and 460–480 (IAFY…LLAI). Residues 481-508 (LPCWDMCNKKLPKPAVPTTFFYKVASNV) lie on the Cytoplasmic side of the membrane.

The protein belongs to the major facilitator superfamily. Monocarboxylate porter (TC 2.A.1.13) family.

It localises to the cell membrane. The catalysed reaction is creatine(in) = creatine(out). It carries out the reaction (R)-carnitine(in) = (R)-carnitine(out). Its function is as follows. Extracellular pH-and Na(+)-sensitive low-affinity creatine transporter. Also functions as a pH-independent carnitine efflux transporter. The chain is Monocarboxylate transporter 9 (Slc16a9) from Mus musculus (Mouse).